Reading from the N-terminus, the 101-residue chain is Small ribosomal subunit protein uS14 (101 aa).

The protein belongs to the universal ribosomal protein uS14 family. In terms of assembly, part of the 30S ribosomal subunit. Contacts proteins S3 and S10.

Functionally, binds 16S rRNA, required for the assembly of 30S particles and may also be responsible for determining the conformation of the 16S rRNA at the A site. This chain is Small ribosomal subunit protein uS14, found in Histophilus somni (strain 2336) (Haemophilus somnus).